Consider the following 248-residue polypeptide: Ubiquinone biosynthesis O-methyltransferase (248 aa).

Residues arginine 41, glycine 72, aspartate 93, and methionine 136 each contribute to the S-adenosyl-L-methionine site.

It belongs to the methyltransferase superfamily. UbiG/COQ3 family.

The catalysed reaction is a 3-demethylubiquinol + S-adenosyl-L-methionine = a ubiquinol + S-adenosyl-L-homocysteine + H(+). It carries out the reaction a 3-(all-trans-polyprenyl)benzene-1,2-diol + S-adenosyl-L-methionine = a 2-methoxy-6-(all-trans-polyprenyl)phenol + S-adenosyl-L-homocysteine + H(+). It functions in the pathway cofactor biosynthesis; ubiquinone biosynthesis. Its function is as follows. O-methyltransferase that catalyzes the 2 O-methylation steps in the ubiquinone biosynthetic pathway. This chain is Ubiquinone biosynthesis O-methyltransferase, found in Brucella melitensis biotype 2 (strain ATCC 23457).